The chain runs to 119 residues: Holo-[acyl-carrier-protein] synthase (119 aa).

Mg(2+) is bound by residues aspartate 8 and glutamate 59.

It belongs to the P-Pant transferase superfamily. AcpS family. Mg(2+) is required as a cofactor.

The protein localises to the cytoplasm. The enzyme catalyses apo-[ACP] + CoA = holo-[ACP] + adenosine 3',5'-bisphosphate + H(+). Transfers the 4'-phosphopantetheine moiety from coenzyme A to a Ser of acyl-carrier-protein. This Lactococcus lactis subsp. cremoris (strain SK11) protein is Holo-[acyl-carrier-protein] synthase.